The following is a 141-amino-acid chain: Hemoglobin subunit alpha (141 aa).

The Globin domain occupies 1–141; the sequence is VLSAADKTNV…VSTVLTSKYR (141 aa). S3 carries the post-translational modification Phosphoserine. Residue K7 is modified to N6-succinyllysine. The residue at position 8 (T8) is a Phosphothreonine. Position 11 is an N6-succinyllysine (K11). An N6-acetyllysine; alternate modification is found at K16. K16 carries the post-translational modification N6-succinyllysine; alternate. S35 is modified (phosphoserine). K40 is modified (N6-succinyllysine). Phosphoserine is present on S49. H58 contributes to the O2 binding site. H87 is a heme b binding site. Residue S102 is modified to Phosphoserine. T108 is modified (phosphothreonine). Phosphoserine occurs at positions 124 and 131. Residues T134 and T137 each carry the phosphothreonine modification. Phosphoserine is present on S138.

The protein belongs to the globin family. In terms of assembly, heterotetramer of two alpha chains and two beta chains. In terms of tissue distribution, red blood cells.

Its function is as follows. Involved in oxygen transport from the lung to the various peripheral tissues. In Sciurus carolinensis (Eastern gray squirrel), this protein is Hemoglobin subunit alpha.